The following is a 136-amino-acid chain: Large ribosomal subunit protein uL16c (136 aa).

This sequence belongs to the universal ribosomal protein uL16 family. In terms of assembly, part of the 50S ribosomal subunit.

It localises to the plastid. It is found in the chloroplast. The polypeptide is Large ribosomal subunit protein uL16c (Citrus sinensis (Sweet orange)).